The sequence spans 82 residues: MAFTLYTLLQAALLCVNAVAVLHEERFLSKIGWGVDHGIGGFGEEPGMKSQLMNLIRSVRTVMRVPLIIVNSVTIVLLLLFG.

2 helical membrane passes run 2–22 (AFTLYTLLQAALLCVNAVAVL) and 62–82 (VMRVPLIIVNSVTIVLLLLFG).

Belongs to the YOS1 family.

The protein resides in the endoplasmic reticulum membrane. Functionally, regulator of endoplasmic reticulum secretion that acts as a key determinant of brain size. Required for secretion of extracellular matrix proteins. Required for correct brain development by depositing sufficient extracellular matrix proteins for tissue integrity and the proliferation of neural progenitors. Acts as a regulator of the unfolded protein response (UPR). The chain is Immediate early response 3-interacting protein 1 from Xenopus laevis (African clawed frog).